Here is a 93-residue protein sequence, read N- to C-terminus: Large ribosomal subunit protein bL31 (93 aa).

The tract at residues 68–93 is disordered; the sequence is GSADAAADEKKPDAKNNNKDNTSKED. Residues 74 to 93 are compositionally biased toward basic and acidic residues; that stretch reads ADEKKPDAKNNNKDNTSKED.

Belongs to the bacterial ribosomal protein bL31 family. Type A subfamily. Part of the 50S ribosomal subunit.

Its function is as follows. Binds the 23S rRNA. The sequence is that of Large ribosomal subunit protein bL31 from Prochlorococcus marinus (strain MIT 9313).